The chain runs to 605 residues: Isocitrate dehydrogenase kinase/phosphatase (605 aa).

ATP is bound by residues 327–333 and lysine 348; that span reads APGIKGL. The active site involves aspartate 383.

Belongs to the AceK family.

The protein resides in the cytoplasm. The enzyme catalyses L-seryl-[isocitrate dehydrogenase] + ATP = O-phospho-L-seryl-[isocitrate dehydrogenase] + ADP + H(+). Its function is as follows. Bifunctional enzyme which can phosphorylate or dephosphorylate isocitrate dehydrogenase (IDH) on a specific serine residue. This is a regulatory mechanism which enables bacteria to bypass the Krebs cycle via the glyoxylate shunt in response to the source of carbon. When bacteria are grown on glucose, IDH is fully active and unphosphorylated, but when grown on acetate or ethanol, the activity of IDH declines drastically concomitant with its phosphorylation. The protein is Isocitrate dehydrogenase kinase/phosphatase of Burkholderia orbicola (strain MC0-3).